A 230-amino-acid chain; its full sequence is Probable GTP-binding protein EngB (230 aa).

Residues 36–224 enclose the EngB-type G domain; it reads ERPKVIVMGR…KHRINKRINI (189 aa). Residues 44 to 51, 69 to 73, 86 to 89, 166 to 169, and 201 to 203 contribute to the GTP site; these read GRSNVGKS, GVTLK, DLPG, NKMD, and VPA. Positions 51 and 71 each coordinate Mg(2+).

The protein belongs to the TRAFAC class TrmE-Era-EngA-EngB-Septin-like GTPase superfamily. EngB GTPase family. It depends on Mg(2+) as a cofactor.

Necessary for normal cell division and for the maintenance of normal septation. The polypeptide is Probable GTP-binding protein EngB (Methanococcus maripaludis (strain DSM 14266 / JCM 13030 / NBRC 101832 / S2 / LL)).